The following is a 276-amino-acid chain: Imidazole glycerol phosphate synthase subunit HisF (276 aa).

Residues aspartate 11 and aspartate 130 contribute to the active site.

This sequence belongs to the HisA/HisF family. As to quaternary structure, heterodimer of HisH and HisF.

It is found in the cytoplasm. The enzyme catalyses 5-[(5-phospho-1-deoxy-D-ribulos-1-ylimino)methylamino]-1-(5-phospho-beta-D-ribosyl)imidazole-4-carboxamide + L-glutamine = D-erythro-1-(imidazol-4-yl)glycerol 3-phosphate + 5-amino-1-(5-phospho-beta-D-ribosyl)imidazole-4-carboxamide + L-glutamate + H(+). Its pathway is amino-acid biosynthesis; L-histidine biosynthesis; L-histidine from 5-phospho-alpha-D-ribose 1-diphosphate: step 5/9. Its function is as follows. IGPS catalyzes the conversion of PRFAR and glutamine to IGP, AICAR and glutamate. The HisF subunit catalyzes the cyclization activity that produces IGP and AICAR from PRFAR using the ammonia provided by the HisH subunit. This chain is Imidazole glycerol phosphate synthase subunit HisF, found in Beijerinckia indica subsp. indica (strain ATCC 9039 / DSM 1715 / NCIMB 8712).